The sequence spans 578 residues: ATP-dependent RNA helicase has-1 (578 aa).

Residues 1–91 (MASEFSKKRK…KDAEAGDELT (91 aa)) form a disordered region. Residues 13 to 26 (DAKIATEDGAATDK) show a composition bias toward basic and acidic residues. The span at 27–36 (KTKKVKKDKK) shows a compositional bias: basic residues. Composition is skewed to acidic residues over residues 43-54 (EVVEDATPEEEN) and 77-88 (EDSDDKDAEAGD). The short motif at 107–135 (TDFSELNLSDKTMKAIAEMGFTKMTEIQR) is the Q motif element. The Helicase ATP-binding domain occupies 138–313 (IPPLLAGKDV…RISLRPGPLY (176 aa)). 151 to 158 (AKTGSGKT) is an ATP binding site. Positions 260–263 (DEAD) match the DEAD box motif. The Bipartite nuclear localization signal motif lies at 339–355 (KRFLLLFSFLKKMQKKK). Positions 343 to 497 (LLFSFLKKMQ…NVQSQLEKLI (155 aa)) constitute a Helicase C-terminal domain. A disordered region spans residues 556–578 (SMSRDKKQTSRRAYGSQPKQNRH).

The protein belongs to the DEAD box helicase family. DDX18/HAS1 subfamily. As to quaternary structure, associates in the nucleolus with the 60S and pre-60S ribosomal subunits.

The protein resides in the nucleus. It is found in the nucleolus. The catalysed reaction is ATP + H2O = ADP + phosphate + H(+). Its function is as follows. ATP-dependent RNA helicase involved in 40S ribosomal subunit biogenesis. Required for the processing and cleavage of 35S pre-rRNA at sites A0, A1, and A2, leading to mature 18S rRNA. The chain is ATP-dependent RNA helicase has-1 (has-1) from Neurospora crassa (strain ATCC 24698 / 74-OR23-1A / CBS 708.71 / DSM 1257 / FGSC 987).